A 307-amino-acid chain; its full sequence is Fructose-bisphosphate aldolase (307 aa).

Ser49 is a binding site for D-glyceraldehyde 3-phosphate. The active-site Proton donor is the Asp82. Residues His83, Asp104, Glu134, and His180 each coordinate Zn(2+). Gly181 serves as a coordination point for dihydroxyacetone phosphate. His210 serves as a coordination point for Zn(2+). Residues 211–213 (GAS) and 253–256 (NTDT) contribute to the dihydroxyacetone phosphate site.

The protein belongs to the class II fructose-bisphosphate aldolase family. As to quaternary structure, homodimer. It depends on Zn(2+) as a cofactor.

The catalysed reaction is beta-D-fructose 1,6-bisphosphate = D-glyceraldehyde 3-phosphate + dihydroxyacetone phosphate. The protein operates within carbohydrate degradation; glycolysis; D-glyceraldehyde 3-phosphate and glycerone phosphate from D-glucose: step 4/4. Its function is as follows. Catalyzes the aldol condensation of dihydroxyacetone phosphate (DHAP or glycerone-phosphate) with glyceraldehyde 3-phosphate (G3P) to form fructose 1,6-bisphosphate (FBP) in gluconeogenesis and the reverse reaction in glycolysis. The sequence is that of Fructose-bisphosphate aldolase (fba) from Helicobacter pylori (strain J99 / ATCC 700824) (Campylobacter pylori J99).